Reading from the N-terminus, the 396-residue chain is 1-deoxy-D-xylulose 5-phosphate reductoisomerase (396 aa).

Residues Thr10, Gly11, Ser12, Ile13, Asn38, and Asn123 each coordinate NADPH. Lys124 is a 1-deoxy-D-xylulose 5-phosphate binding site. An NADPH-binding site is contributed by Glu125. Asp149 contributes to the Mn(2+) binding site. Residues Ser150, Glu151, Ser185, and His208 each contribute to the 1-deoxy-D-xylulose 5-phosphate site. Glu151 is a Mn(2+) binding site. Residue Gly214 coordinates NADPH. Ser221, Asn226, Lys227, and Glu230 together coordinate 1-deoxy-D-xylulose 5-phosphate. Glu230 is a Mn(2+) binding site.

Belongs to the DXR family. Requires Mg(2+) as cofactor. Mn(2+) is required as a cofactor.

The catalysed reaction is 2-C-methyl-D-erythritol 4-phosphate + NADP(+) = 1-deoxy-D-xylulose 5-phosphate + NADPH + H(+). Its pathway is isoprenoid biosynthesis; isopentenyl diphosphate biosynthesis via DXP pathway; isopentenyl diphosphate from 1-deoxy-D-xylulose 5-phosphate: step 1/6. Its function is as follows. Catalyzes the NADPH-dependent rearrangement and reduction of 1-deoxy-D-xylulose-5-phosphate (DXP) to 2-C-methyl-D-erythritol 4-phosphate (MEP). The chain is 1-deoxy-D-xylulose 5-phosphate reductoisomerase from Shewanella halifaxensis (strain HAW-EB4).